Consider the following 312-residue polypeptide: DNA-directed RNA polymerase subunit alpha (312 aa).

The alpha N-terminal domain (alpha-NTD) stretch occupies residues 1–226; that stretch reads MIEFKKPNIT…EHFKAFESAD (226 aa). The segment at 243–312 is alpha C-terminal domain (alpha-CTD); that stretch reads KEKKLEMTIE…DLGLSLRQED (70 aa).

The protein belongs to the RNA polymerase alpha chain family. As to quaternary structure, homodimer. The RNAP catalytic core consists of 2 alpha, 1 beta, 1 beta' and 1 omega subunit. When a sigma factor is associated with the core the holoenzyme is formed, which can initiate transcription.

The catalysed reaction is RNA(n) + a ribonucleoside 5'-triphosphate = RNA(n+1) + diphosphate. Its function is as follows. DNA-dependent RNA polymerase catalyzes the transcription of DNA into RNA using the four ribonucleoside triphosphates as substrates. This Lactobacillus delbrueckii subsp. bulgaricus (strain ATCC BAA-365 / Lb-18) protein is DNA-directed RNA polymerase subunit alpha.